The chain runs to 263 residues: MTTTARVPILADSDAETVAVKAIAERWGLPFETTDNDVFQLWLTEGVLALHWLQSPQKMSPLVVDFHQGKAAYRAQNTQLKNEAIAKAVGVTGQFKPSVVDGTAGLGRDAFVLAGLGCNVQLIERHPVVAALLDNGLHRAQKEHDFIGDTCLRMQLIGTDNLFTGSGYTQEPDVVYLDPMYPKTGKQKAQVKKDMQMFQQLVGSDEDADTLLEPAIALAKYRVVVKRPNSAPFLAGREPNSQIKSKKHRFDVYIKRGFHESAN.

S-adenosyl-L-methionine contacts are provided by residues 108-109 (RD), 124-125 (ER), and aspartate 178.

This sequence belongs to the methyltransferase superfamily. RsmJ family.

The protein localises to the cytoplasm. The catalysed reaction is guanosine(1516) in 16S rRNA + S-adenosyl-L-methionine = N(2)-methylguanosine(1516) in 16S rRNA + S-adenosyl-L-homocysteine + H(+). Functionally, specifically methylates the guanosine in position 1516 of 16S rRNA. The chain is Ribosomal RNA small subunit methyltransferase J from Idiomarina loihiensis (strain ATCC BAA-735 / DSM 15497 / L2-TR).